We begin with the raw amino-acid sequence, 75 residues long: UPF0270 protein PSEEN1465 (75 aa).

The protein belongs to the UPF0270 family.

This chain is UPF0270 protein PSEEN1465, found in Pseudomonas entomophila (strain L48).